We begin with the raw amino-acid sequence, 89 residues long: Small ribosomal subunit protein uS15 (89 aa).

The protein belongs to the universal ribosomal protein uS15 family. As to quaternary structure, part of the 30S ribosomal subunit. Forms a bridge to the 50S subunit in the 70S ribosome, contacting the 23S rRNA.

In terms of biological role, one of the primary rRNA binding proteins, it binds directly to 16S rRNA where it helps nucleate assembly of the platform of the 30S subunit by binding and bridging several RNA helices of the 16S rRNA. Its function is as follows. Forms an intersubunit bridge (bridge B4) with the 23S rRNA of the 50S subunit in the ribosome. This chain is Small ribosomal subunit protein uS15, found in Syntrophomonas wolfei subsp. wolfei (strain DSM 2245B / Goettingen).